The sequence spans 1709 residues: MRAGWTPRGFSAFHASLLPGRHPYLAHLGPRDRGARIGSRAYSQGCCSCLWLTYKGKKEGSTKGELGPAAVTDLEIPSYSRGFLPCTPRFPTTWCRGPGCFCGTAVIAGNLGDLARIVGPSHHASQLLLLQEQDSGNHPTMAESLSEISDSLDVLEAGDEGKKKCKFKALKSFFVKKKEKEAEDTQEEEMLELSLSSSNINISSLQPVRENQPTKARAKSSMGSKALSHDSIFMLGPEPERSASKMFPSMDPQRGRPQQRSHISRTLPKPRSKVPGVVSGAMSGAVLQNVPTSAVWVAGPKITENPPSRRRRLSIIPPVIQPEIISKNLVEISLDDESPKNPQKKALPHKSLTATQSFSELSSGPDCSQSLTAFATLASTSSTQLPIGFSTPATTQGCLDSSAARHKMTLNPRKQKKNLQVIIRGLPVWFSHFQGILEGSLQCVTQTLETPNLDEPLPVEPKEEEPNLPLVSEEEKSITKPKEINEKKLGMDSADSSSQKQNNKTEMYDKKTTDQAPNTDASRSQGYPMSAAYGRRWRRKGASVSGLSGCEFKGRSLKQSSEGYGLGDRAGSSPTNKTARNVPFSHLSLEKDNMEQPTTSQPETTTPQGLLSDKDDMGRRNAGIDFGSRKASAAQPIPENMDNSMVSDPQPYHEDAASGAEKTEARASLSLMVESLSTTQEEAILSVAAEAQVFMNPSHIQLEDQEAFSFDLQKAQSKMESAQDVQTICKEKPSGNVHQTFTASVLGMTSTTAKGDVYAKTLPPRSLFQSSRKPDAEEVSSDSENIPEEGDGSEELAHGHSSQSLGKFEDEQEVFSESKSFVEDLSSSEEELDLRCLSQALEEPEDAEVFTESSSYVEKYNTSDDCSSSEEDLPLRHPAQALGKPKNQQEVSSASNNTPEEQNDFMQQLPSRCPSQPIMNPTVQQQVPTSSVGTSIKQSDSVEPIPPRHPFQPWVNPKVEQEVSSSPKSMAVEESISMKPLPPKLLCQPLMNPKVQQNMFSGSEDIAVERVISVEPLLPRYSPQSLTDPQIRQISESTAVEEGTYVEPLPPRCLSQPSERPKFLDSMSTSAEWSSPVAPTPSKYTSPPWVTPKFEELYQLSAHPESTTVEEDISKEQLLPRHLSQLTVGNKVQQLSSNFERAAIEADISGSPLPPQYATQFLKRSKVQEMTSRLEKMAVEGTSNKSPIPRRPTQSFVKFMAQQIFSESSALKRGSDVAPLPPNLPSKSLSKPEVKHQVFSDSGSANPKGGISSKMLPMKHPLQSLGRPEDPQKVFSYSERAPGKCSSFKEQLSPRQLSQALRKPEYEQKVSPVSASSPKEWRNSKKQLPPKHSSQASDRSKFQPQMSSKGPVNVPVKQSSGEKHLPSSSPFQQQVHSSSVNAAARRSVFESNSDNWFLGRDEAFAIKTKKFSQGSKNPIKSIPAPATKPGKFTIAPVRQTSTSGGIYSKKEDLESGDGNNNQHANLSNQDDVEKLFGVRLKRAPPSQKYKSEKQDNFTQLASVPSGPISSSVGRGHKIRSTSQGLLDAAGNLTKISYVADKQQSRPKSESMAKKQPACKTPGKPAGQQSDYAVSEPVWITMAKQKQKSFKAHISVKELKTKSNAGADAETKEPKYEGAGSANENQPKKMFTSSVHKQEKTAQMKPPKPTKSVGFEAQKILQVPAMEKETKRSSTLPAKFQNPVEPIEPVWFSLARKKAKAWSHMAEITQ.

Disordered stretches follow at residues 207–226, 239–275, 451–663, 763–973, 1211–1382, 1408–1516, 1539–1571, and 1589–1653; these read PVRENQPTKARAKSSMGSKA, PERSASKMFPSMDPQRGRPQQRSHISRTLPKPRSKVP, PNLD…AEKT, PPRS…MAVE, LKRG…SVNA, TKKF…GRGH, ADKQQSRPKSESMAKKQPACKTPGKPAGQQSDY, and FKAH…KSVG. Over residues 257–272 the composition is skewed to basic residues; it reads PQQRSHISRTLPKPRS. Over residues 473 to 490 the composition is skewed to basic and acidic residues; that stretch reads EEEKSITKPKEINEKKLG. Composition is skewed to polar residues over residues 494–505 and 514–527; these read ADSSSQKQNNKT and DQAPNTDASRSQGY. Residues 595 to 608 are compositionally biased toward low complexity; that stretch reads EQPTTSQPETTTPQ. Residues 651-663 show a composition bias toward basic and acidic residues; the sequence is PYHEDAASGAEKT. Residues 777 to 794 show a composition bias toward acidic residues; that stretch reads EEVSSDSENIPEEGDGSE. Polar residues-rich tracts occupy residues 886-941, 1288-1299, 1332-1350, 1366-1376, and 1457-1469; these read KNQQ…QSDS, FKEQLSPRQLSQ, HSSQASDRSKFQPQMSSKG, PSSSPFQQQVH, and DGNNNQHANLSNQ. Residues 1502 to 1513 are compositionally biased toward low complexity; sequence SVPSGPISSSVG. Residues 1542-1552 show a composition bias toward basic and acidic residues; the sequence is QQSRPKSESMA.

Interacts with TOP2B.

The protein localises to the cytoplasmic vesicle. Its subcellular location is the secretory vesicle. It is found in the acrosome. This Homo sapiens (Human) protein is Acrosomal protein KIAA1210.